The primary structure comprises 278 residues: Indole-3-glycerol phosphate synthase (278 aa).

The protein belongs to the TrpC family.

It carries out the reaction 1-(2-carboxyphenylamino)-1-deoxy-D-ribulose 5-phosphate + H(+) = (1S,2R)-1-C-(indol-3-yl)glycerol 3-phosphate + CO2 + H2O. Its pathway is amino-acid biosynthesis; L-tryptophan biosynthesis; L-tryptophan from chorismate: step 4/5. The chain is Indole-3-glycerol phosphate synthase from Pseudomonas fluorescens (strain SBW25).